Here is an 86-residue protein sequence, read N- to C-terminus: Exodeoxyribonuclease 7 small subunit (86 aa).

The tract at residues 1–26 is disordered; sequence MQDELFETEKAPQKNTKNAKNAPKKS.

The protein belongs to the XseB family. As to quaternary structure, heterooligomer composed of large and small subunits.

The protein resides in the cytoplasm. It carries out the reaction Exonucleolytic cleavage in either 5'- to 3'- or 3'- to 5'-direction to yield nucleoside 5'-phosphates.. In terms of biological role, bidirectionally degrades single-stranded DNA into large acid-insoluble oligonucleotides, which are then degraded further into small acid-soluble oligonucleotides. The polypeptide is Exodeoxyribonuclease 7 small subunit (Helicobacter pylori (strain HPAG1)).